Here is a 211-residue protein sequence, read N- to C-terminus: Glycerol-3-phosphate acyltransferase (211 aa).

5 helical membrane-spanning segments follow: residues 5–25 (VILG…TGYL), 55–75 (GPGL…ILVA), 85–105 (PVPA…AVLA), 126–146 (VLLA…LVVL), and 168–188 (WFFT…AFVI).

This sequence belongs to the PlsY family. As to quaternary structure, probably interacts with PlsX.

Its subcellular location is the cell inner membrane. The enzyme catalyses an acyl phosphate + sn-glycerol 3-phosphate = a 1-acyl-sn-glycero-3-phosphate + phosphate. The protein operates within lipid metabolism; phospholipid metabolism. Catalyzes the transfer of an acyl group from acyl-phosphate (acyl-PO(4)) to glycerol-3-phosphate (G3P) to form lysophosphatidic acid (LPA). This enzyme utilizes acyl-phosphate as fatty acyl donor, but not acyl-CoA or acyl-ACP. The polypeptide is Glycerol-3-phosphate acyltransferase (Thermosynechococcus vestitus (strain NIES-2133 / IAM M-273 / BP-1)).